Here is a 287-residue protein sequence, read N- to C-terminus: MPYTKKKPIIIVDGSLYLYRSYFTFQNFNSNEENPSGAIYGMLKTIQNILNKNYNSKKIIIIFDSSKKNFRNTIFKEYKSNRSAMPNKLYVQIQPLFKILEEIGIKTLSILGIEADDIIGSLAYKLEQKGEQVLIVSHDKDMIQLITDNINVLNISKNSILTPEKIQEKYGIYPKEFIDLLALMGDSSDNIPGVPKIGIKTALFLLKKFSNIKNIYNNIEKIQSLPFRNAKNAAIQLKNYKKTAFLSYQLAKIKLDVPINITSEEITLKKTCFKKLSNLIRWYSFNE.

In terms of domain architecture, 5'-3' exonuclease spans 172–270 (IYPKEFIDLL…ITSEEITLKK (99 aa)).

Its function is as follows. 5'-3' exonuclease acting preferentially on double-stranded DNA. This is 5'-3' exonuclease (pol) from Buchnera aphidicola subsp. Schizaphis graminum (strain Sg).